Here is a 331-residue protein sequence, read N- to C-terminus: L-lactate dehydrogenase A chain (331 aa).

NAD(+) contacts are provided by residues 29-57 (GMVG…MEDK) and arginine 98. Positions 105, 137, and 168 each coordinate substrate. Position 137 (asparagine 137) interacts with NAD(+). Histidine 192 (proton acceptor) is an active-site residue. Threonine 247 contributes to the substrate binding site.

The protein belongs to the LDH/MDH superfamily. LDH family. Homotetramer.

The protein resides in the cytoplasm. It carries out the reaction (S)-lactate + NAD(+) = pyruvate + NADH + H(+). It participates in fermentation; pyruvate fermentation to lactate; (S)-lactate from pyruvate: step 1/1. Its function is as follows. Interconverts simultaneously and stereospecifically pyruvate and lactate with concomitant interconversion of NADH and NAD(+). The polypeptide is L-lactate dehydrogenase A chain (ldha) (Chaenocephalus aceratus (Blackfin icefish)).